The chain runs to 311 residues: MPDKTYQPTIAGLRAFVAVAEKRQFSGAATALGVSQSTLSQVLAALEAGLGTQLVERSTRRVFLTPQGAELLPHAQAVVEAADAFTAAAAGSTDPLRAGMRLGLIPTVVPYVLPTVLAGIAERRPGLTLRVTEDQTERLLAVLREGALDAALIALPAETAGVTAIPIYDEDFVLALPPGHPLAGKRRVPATALADLPLLLLDEGHCLRDQALDVCHKAGVRAELANTRAASLATAVQCVTGGLGVTLIPQSAVPVEASRSRLGLAQFAAPRPGRRIGLVFRSSSGRDDSYRELAGLIGELISSQHQVRLVK.

Positions 8–65 (PTIAGLRAFVAVAEKRQFSGAATALGVSQSTLSQVLAALEAGLGTQLVERSTRRVFLT) constitute an HTH lysR-type domain. Residues 25-44 (FSGAATALGVSQSTLSQVLA) constitute a DNA-binding region (H-T-H motif).

Belongs to the LysR transcriptional regulatory family.

Functionally, required for the induction the katG gene for catalase. Involved in the response to hydrogen peroxide. The polypeptide is Probable hydrogen peroxide-inducible genes activator (oxyR) (Mycobacterium avium).